Here is a 397-residue protein sequence, read N- to C-terminus: Pectate lyase 4 (397 aa).

Positions 1–25 (MGIKHCCYILYFTLALVTLVQAGRL) are cleaved as a signal peptide. Asn36 carries N-linked (GlcNAc...) asparagine glycosylation. Cysteines 54 and 71 form a disulfide. PbH1 repeat units follow at residues 159–202 (VKNV…HVTG), 203–224 (SSDIWIDHCTLSKSFDGLVDVN), and 227–248 (STGVTISNCKFTHHEKAVLLGA). Residues Asp194, Asp218, and Asp222 each coordinate Ca(2+). Residue Arg274 is part of the active site.

It belongs to the polysaccharide lyase 1 family. Amb a subfamily. Monomer. The cofactor is Ca(2+). In terms of processing, the N-terminus is blocked. In terms of tissue distribution, pollen and flowers.

It catalyses the reaction Eliminative cleavage of (1-&gt;4)-alpha-D-galacturonan to give oligosaccharides with 4-deoxy-alpha-D-galact-4-enuronosyl groups at their non-reducing ends.. It functions in the pathway glycan metabolism; pectin degradation; 2-dehydro-3-deoxy-D-gluconate from pectin: step 2/5. Its function is as follows. Has pectate lyase activity. The polypeptide is Pectate lyase 4 (Ambrosia artemisiifolia (Common ragweed)).